A 315-amino-acid polypeptide reads, in one-letter code: Calumenin (315 aa).

Positions 1–19 are cleaved as a signal peptide; sequence MNKRPLLLCLGLWVACTLS. EF-hand domains follow at residues 68–103, 104–139, 151–186, 188–223, 229–264, and 265–300; these read ESKERLGMIVGKIDLDNDGYVTEGELTAWIKKAQKK, YVYDNVERQWQEFDLSQDGLVSWDEYRNVTYGTYLD, QMMIRDERRFKMADKDGDLVATKEEFTAFLHPEEFD, MKDIVVLETMEDIDKNGDGLIDLEEYIGDMYNHDGD, WVKTEREQFMEFRDKNHDGKMDKEETKDWILPSDYD, and HSEAESRHLVYESDHNQDGKLTREEIVDKYDLFVGS. Residues aspartate 81, aspartate 83, aspartate 85, tyrosine 87, glutamate 92, aspartate 117, serine 119, aspartate 121, and glutamate 128 each contribute to the Ca(2+) site. The N-linked (GlcNAc...) asparagine glycan is linked to asparagine 131. Residues aspartate 164, aspartate 166, aspartate 168, glutamate 175, aspartate 201, asparagine 203, aspartate 205, glutamate 212, aspartate 242, asparagine 244, aspartate 246, lysine 248, glutamate 253, aspartate 278, asparagine 280, aspartate 282, lysine 284, and glutamate 289 each coordinate Ca(2+). The Prevents secretion from ER motif lies at 312-315; that stretch reads HDEF.

It belongs to the CREC family. As to quaternary structure, interacts with ggcx.

The protein localises to the endoplasmic reticulum membrane. Its subcellular location is the golgi apparatus. It localises to the secreted. The protein resides in the melanosome. It is found in the sarcoplasmic reticulum lumen. Involved in regulation of vitamin K-dependent carboxylation of multiple N-terminal glutamate residues. Seems to inhibit gamma-carboxylase ggcx. Binds 7 calcium ions with a low affinity. The polypeptide is Calumenin (calu) (Xenopus laevis (African clawed frog)).